Reading from the N-terminus, the 137-residue chain is Putative pre-16S rRNA nuclease (137 aa).

The protein belongs to the YqgF nuclease family.

The protein localises to the cytoplasm. In terms of biological role, could be a nuclease involved in processing of the 5'-end of pre-16S rRNA. This chain is Putative pre-16S rRNA nuclease, found in Flavobacterium psychrophilum (strain ATCC 49511 / DSM 21280 / CIP 103535 / JIP02/86).